We begin with the raw amino-acid sequence, 473 residues long: Photosystem II CP43 reaction center protein (473 aa).

The propeptide occupies 1 to 14 (MKTLYSLRRFYPVE). Thr-15 is subject to N-acetylthreonine. Thr-15 is modified (phosphothreonine). 5 helical membrane passes run 69–93 (LFEVAHFVPEKPMYEQGLILLPHLA), 134–155 (LLGPETLEESFPFFGYVWKDRN), 178–200 (KALYFGGVYDTWAPGGGDVRKIT), 255–275 (KPFAWARRALVWSGEAYLSYS), and 291–312 (WFNNTAYPSEFYGPTGPEASQA). Glu-367 is a [CaMn4O5] cluster binding site. Residues 447 to 471 (RARAAAAGFEKGIDRDFEPALSMTP) form a helical membrane-spanning segment.

Belongs to the PsbB/PsbC family. PsbC subfamily. As to quaternary structure, PSII is composed of 1 copy each of membrane proteins PsbA, PsbB, PsbC, PsbD, PsbE, PsbF, PsbH, PsbI, PsbJ, PsbK, PsbL, PsbM, PsbT, PsbX, PsbY, PsbZ, Psb30/Ycf12, at least 3 peripheral proteins of the oxygen-evolving complex and a large number of cofactors. It forms dimeric complexes. It depends on Binds multiple chlorophylls and provides some of the ligands for the Ca-4Mn-5O cluster of the oxygen-evolving complex. It may also provide a ligand for a Cl- that is required for oxygen evolution. PSII binds additional chlorophylls, carotenoids and specific lipids. as a cofactor.

It is found in the plastid. The protein localises to the chloroplast thylakoid membrane. Functionally, one of the components of the core complex of photosystem II (PSII). It binds chlorophyll and helps catalyze the primary light-induced photochemical processes of PSII. PSII is a light-driven water:plastoquinone oxidoreductase, using light energy to abstract electrons from H(2)O, generating O(2) and a proton gradient subsequently used for ATP formation. This chain is Photosystem II CP43 reaction center protein, found in Oenothera argillicola (Appalachian evening primrose).